Consider the following 233-residue polypeptide: Lipoprotein-releasing system ATP-binding protein LolD (233 aa).

An ABC transporter domain is found at 6-233; sequence LQCDNLCKRY…TAELSLMGAE (228 aa). 42–49 lines the ATP pocket; it reads GSSGSGKS.

The protein belongs to the ABC transporter superfamily. Lipoprotein translocase (TC 3.A.1.125) family. As to quaternary structure, the complex is composed of two ATP-binding proteins (LolD) and two transmembrane proteins (LolC and LolE).

The protein resides in the cell inner membrane. Part of the ABC transporter complex LolCDE involved in the translocation of mature outer membrane-directed lipoproteins, from the inner membrane to the periplasmic chaperone, LolA. Responsible for the formation of the LolA-lipoprotein complex in an ATP-dependent manner. The polypeptide is Lipoprotein-releasing system ATP-binding protein LolD (Shigella flexneri).